A 440-amino-acid polypeptide reads, in one-letter code: V-type ATP synthase beta chain (440 aa).

It belongs to the ATPase alpha/beta chains family.

Its function is as follows. Produces ATP from ADP in the presence of a proton gradient across the membrane. The V-type beta chain is a regulatory subunit. The sequence is that of V-type ATP synthase beta chain from Geotalea uraniireducens (strain Rf4) (Geobacter uraniireducens).